Consider the following 323-residue polypeptide: Beta-ketoacyl-[acyl-carrier-protein] synthase III (323 aa).

Active-site residues include Cys112 and His250. An ACP-binding region spans residues 251-255 (QANQR). Asn280 is an active-site residue.

It belongs to the thiolase-like superfamily. FabH family. As to quaternary structure, homodimer.

The protein localises to the cytoplasm. The enzyme catalyses malonyl-[ACP] + acetyl-CoA + H(+) = 3-oxobutanoyl-[ACP] + CO2 + CoA. The protein operates within lipid metabolism; fatty acid biosynthesis. In terms of biological role, catalyzes the condensation reaction of fatty acid synthesis by the addition to an acyl acceptor of two carbons from malonyl-ACP. Catalyzes the first condensation reaction which initiates fatty acid synthesis and may therefore play a role in governing the total rate of fatty acid production. Possesses both acetoacetyl-ACP synthase and acetyl transacylase activities. Its substrate specificity determines the biosynthesis of branched-chain and/or straight-chain of fatty acids. The polypeptide is Beta-ketoacyl-[acyl-carrier-protein] synthase III (Oenococcus oeni (strain ATCC BAA-331 / PSU-1)).